A 153-amino-acid chain; its full sequence is Insulin-like growth factor 1.S (153 aa).

Intrachain disulfides connect Cys-29–Cys-38, Cys-54–Cys-96, Cys-66–Cys-109, and Cys-100–Cys-109. A b region spans residues 49-77 (GPETLCGAELVDTLQFVCGDRGFYFSKPT). Residues 78–89 (GYGSNNRRSHHR) are c. Residues 90–110 (GIVDECCFQSCDFRRLEMYCA) form an a region. A d region spans residues 111-118 (PAKQAKSA). The propeptide at 119-153 (RSVRTQRHTDMPKAQKEVHPKNTSRGNTGSRGFRM) is e peptide. The disordered stretch occupies residues 119 to 153 (RSVRTQRHTDMPKAQKEVHPKNTSRGNTGSRGFRM). A compositionally biased stretch (basic and acidic residues) spans 125 to 138 (RHTDMPKAQKEVHP). Positions 139–153 (KNTSRGNTGSRGFRM) are enriched in polar residues.

It belongs to the insulin family. In terms of tissue distribution, expressed in adult liver, lung, heart, kidney and peritoneal fat.

It is found in the secreted. Functionally, the insulin-like growth factors, isolated from plasma, are structurally and functionally related to insulin but have a much higher growth-promoting activity. Promotes head development by inhibiting Wnt signaling during embryogenesis. Acts as a ligand for IGF1R. Binds to the alpha subunit of IGF1R, leading to the activation of the intrinsic tyrosine kinase activity which autophosphorylates tyrosine residues in the beta subunit thus initiatiating a cascade of down-stream signaling events leading to activation of the PI3K-AKT/PKB and the Ras-MAPK pathways. Binds to integrins. Its binding to integrins and subsequent ternary complex formation with integrins and IGFR1 are essential for IGF1 signaling. This Xenopus laevis (African clawed frog) protein is Insulin-like growth factor 1.S.